The chain runs to 435 residues: MTLKIPIQEMVKMVGSLRSHGIDIPESMEINKKEKIYVAVTEKDLESKSSLVWAIQNSGGKEFCIVHVHQPIPGEMFHEQKLRLYRKEKDKAHKNSEKYLQICRQMQVTAEIIYIETDSVEKGILQLISQRGVTKLVMGAAADRHYSMRMRDLKSKKAIYIHREAPATCLIWFTCNGYLICSREARRANNLYLECASSNSLSQSDITRGTESIVKDDDHLIKLAVTEAEASKRKARFEACKREEAEKTAVDALKKAKQWENVYFEELKQRKETEKALRKRNDELEKMRSESETQITESYTVIRKLQEKNNLSMETFRGIREEQEELKIKLREVSKLKGKREEEEASTSNHREPPQYFICPITHDIMEDPHVAADGFTYEGEAISRWFERGHETSPMINKRLPHTSLVPNLALRSAIQEWLQLRELLNRPSACREI.

Positions 227–345 (EAEASKRKAR…LKGKREEEEA (119 aa)) form a coiled coil. One can recognise a U-box domain in the interval 352-426 (EPPQYFICPI…QEWLQLRELL (75 aa)).

It catalyses the reaction S-ubiquitinyl-[E2 ubiquitin-conjugating enzyme]-L-cysteine + [acceptor protein]-L-lysine = [E2 ubiquitin-conjugating enzyme]-L-cysteine + N(6)-ubiquitinyl-[acceptor protein]-L-lysine.. Its pathway is protein modification; protein ubiquitination. Its function is as follows. Functions as an E3 ubiquitin ligase. The polypeptide is U-box domain-containing protein 36 (PUB36) (Arabidopsis thaliana (Mouse-ear cress)).